Consider the following 184-residue polypeptide: Ras-related protein RabN2 (184 aa).

GTP is bound at residue 3-10 (GDYRSGKT). Positions 25–32 (TNPSTFDY) match the Effector region motif. GTP is bound by residues 50 to 54 (DTAGH) and 117 to 120 (TKSD).

Belongs to the small GTPase superfamily. Rab family.

This chain is Ras-related protein RabN2 (rabN2), found in Dictyostelium discoideum (Social amoeba).